Consider the following 338-residue polypeptide: Ferredoxin--NADP reductase (338 aa).

Residues aspartate 38, glutamine 46, tyrosine 51, valine 91, phenylalanine 125, aspartate 291, and threonine 331 each contribute to the FAD site.

Belongs to the ferredoxin--NADP reductase type 2 family. Homodimer. FAD is required as a cofactor.

It carries out the reaction 2 reduced [2Fe-2S]-[ferredoxin] + NADP(+) + H(+) = 2 oxidized [2Fe-2S]-[ferredoxin] + NADPH. The polypeptide is Ferredoxin--NADP reductase (Orientia tsutsugamushi (strain Ikeda) (Rickettsia tsutsugamushi)).